A 1059-amino-acid polypeptide reads, in one-letter code: Ubiquitin carboxyl-terminal hydrolase 36 (1059 aa).

2 disordered regions span residues 22–45 (LGGN…NGSL) and 102–145 (GKLV…KPKR). Polar residues predominate over residues 23–45 (GGNSSAGSSTDQAKSGEDTNGSL). The span at 121 to 138 (HPNNQSHHNHPHPTSNPN) shows a compositional bias: low complexity. In terms of domain architecture, USP spans 168–457 (TGMINVGNTC…NAYIMFFELD (290 aa)). Cysteine 177 functions as the Nucleophile in the catalytic mechanism. The Proton acceptor role is filled by histidine 416. Disordered stretches follow at residues 464-512 (PPAN…YTNG), 554-853 (ATSA…VTSN), 941-1005 (RQRD…FYNQ), and 1022-1059 (FGGA…QQQT). 2 stretches are compositionally biased toward low complexity: residues 479–494 (STTP…PSPT) and 561–580 (NGNK…KSIN). Phosphoserine is present on residues serine 490 and serine 492. Residues 603–615 (TTAQLPSMPNMTE) show a composition bias toward polar residues. Phosphothreonine is present on residues threonine 632 and threonine 636. A phosphoserine mark is found at serine 646 and serine 648. The span at 673–702 (ESGQTNGHSKTNGSLTNGSASSSVHVNNSK) shows a compositional bias: polar residues. A compositionally biased stretch (basic and acidic residues) spans 703 to 720 (QKTDAIDEIFKSLKKSAD). Serine 721 is subject to Phosphoserine. Positions 721 to 730 (SEEDDDEEEP) are enriched in acidic residues. Residues 740–750 (PQKQSQSQSKA) show a composition bias toward low complexity. Residues 751-760 (PPSPKTPPSP) are compositionally biased toward pro residues. Serine 753 bears the Phosphoserine mark. Threonine 756 is subject to Phosphothreonine. Position 759 is a phosphoserine (serine 759). Positions 779 to 788 (DAIDDDDDAV) are enriched in acidic residues. Phosphothreonine is present on threonine 799. Over residues 806-818 (NPFSSSKPSTDSP) the composition is skewed to polar residues. A Phosphoserine modification is found at serine 817. Residue threonine 820 is modified to Phosphothreonine. Polar residues predominate over residues 833–853 (ALKSHQQPRVGNGYQSNVTSN). Residues 963 to 974 (SGSAKGNNASNS) show a composition bias toward low complexity.

It belongs to the peptidase C19 family. Interacts with atms/PAF1, but not with CycT.

It is found in the nucleus. The protein localises to the nucleolus. The catalysed reaction is Thiol-dependent hydrolysis of ester, thioester, amide, peptide and isopeptide bonds formed by the C-terminal Gly of ubiquitin (a 76-residue protein attached to proteins as an intracellular targeting signal).. In terms of biological role, required for maintaining multiple types of adult stem cells, including male and female germline, epithelial follicle cell and intestinal stem cells. May function as a transcriptional repressor by continually deubiquiting histone H2B at the promoters of genes critical for cellular differentiation, thereby preventing histone H3 'Lys-4' trimethylation (H3K4). Controls selective autophagy activation by ubiquitinated proteins. This chain is Ubiquitin carboxyl-terminal hydrolase 36 (Usp36), found in Drosophila sechellia (Fruit fly).